A 294-amino-acid chain; its full sequence is Syntaxin-19 (294 aa).

Positions 209-271 (LSEIEQRHKE…NNTKEKFGLA (63 aa)) constitute a t-SNARE coiled-coil homology domain.

The protein belongs to the syntaxin family. As to quaternary structure, interacts with EGFR.

It localises to the cell membrane. The protein resides in the cytoplasm. Functionally, plays a role in endosomal trafficking of the epidermal growth factor receptor (EGFR). This Pongo abelii (Sumatran orangutan) protein is Syntaxin-19 (STX19).